The following is a 154-amino-acid chain: MAARLCCQLDTARDVLCLRPVGAESRGRPLPGPLGALPPASPSAVPTDHGAHLSLRGLPVCAFSSTGPCALRFTSARRMETTVNAHRNLPKVLHKRTLGLSAMSTTDLEAYFKDCVFTEWEELGEEMRLKVFVLGGCRHKLVCSPAPCNFFTSA.

Positions 68 to 117 (PCALRFTSARRMETTVNAHRNLPKVLHKRTLGLSAMSTTDLEAYFKDCVF) are mitochondrial targeting sequence.

The protein belongs to the orthohepadnavirus protein X family. As to quaternary structure, may form homodimer. May interact with host CEBPA, CFLAR, CREB1, DDB1, E4F1, HBXIP, HSPD1/HSP60, NFKBIA, POLR2E and SMAD4. Interacts with host SMC5-SMC6 complex and induces its degradation. Interacts with host TRPC4AP; leading to prevent ubiquitination of TRPC4AP. Interacts with host PLSCR1; this interaction promotes ubiquitination and degradation of HBx and impairs HBx-mediated cell proliferation. Post-translationally, a fraction may be phosphorylated in insect cells and HepG2 cells, a human hepatoblastoma cell line. Phosphorylated in vitro by host protein kinase C or mitogen-activated protein kinase. N-acetylated in insect cells.

Its subcellular location is the host cytoplasm. It localises to the host nucleus. The protein resides in the host mitochondrion. Multifunctional protein that plays a role in silencing host antiviral defenses and promoting viral transcription. Does not seem to be essential for HBV infection. May be directly involved in development of cirrhosis and liver cancer (hepatocellular carcinoma). Most of cytosolic activities involve modulation of cytosolic calcium. The effect on apoptosis is controversial depending on the cell types in which the studies have been conducted. May induce apoptosis by localizing in mitochondria and causing loss of mitochondrial membrane potential. May also modulate apoptosis by binding host CFLAR, a key regulator of the death-inducing signaling complex (DISC). Promotes viral transcription by using the host E3 ubiquitin ligase DDB1 to target the SMC5-SMC6 complex to proteasomal degradation. This host complex would otherwise bind to viral episomal DNA, and prevents its transcription. Moderately stimulates transcription of many different viral and cellular transcription elements. Promoters and enhancers stimulated by HBx contain DNA binding sites for NF-kappa-B, AP-1, AP-2, c-EBP, ATF/CREB, or the calcium-activated factor NF-AT. The chain is Protein X from Homo sapiens (Human).